Here is a 466-residue protein sequence, read N- to C-terminus: Methylenetetrahydrofolate--tRNA-(uracil-5-)-methyltransferase TrmFO (466 aa).

14 to 19 (GGGLAG) lines the FAD pocket.

It belongs to the MnmG family. TrmFO subfamily. FAD serves as cofactor.

It is found in the cytoplasm. The enzyme catalyses uridine(54) in tRNA + (6R)-5,10-methylene-5,6,7,8-tetrahydrofolate + NADH + H(+) = 5-methyluridine(54) in tRNA + (6S)-5,6,7,8-tetrahydrofolate + NAD(+). It carries out the reaction uridine(54) in tRNA + (6R)-5,10-methylene-5,6,7,8-tetrahydrofolate + NADPH + H(+) = 5-methyluridine(54) in tRNA + (6S)-5,6,7,8-tetrahydrofolate + NADP(+). In terms of biological role, catalyzes the folate-dependent formation of 5-methyl-uridine at position 54 (M-5-U54) in all tRNAs. This is Methylenetetrahydrofolate--tRNA-(uracil-5-)-methyltransferase TrmFO from Brucella suis (strain ATCC 23445 / NCTC 10510).